The primary structure comprises 294 residues: Homeobox-leucine zipper protein ATHB-13 (294 aa).

A DNA-binding region (homeobox) is located at residues 82–141; sequence MGEKKRRLNMEQVKTLEKNFELGNKLEPERKMQLARALGLQPRQIAIWFQNRRARWKTKQ. A leucine-zipper region spans residues 142–177; that stretch reads LEKDYDTLKRQFDTLKAENDLLQTHNQKLQAEIMGL. A disordered region spans residues 181 to 246; sequence EQTESINLNK…FFPPSPATAT (66 aa). Low complexity predominate over residues 197-210; the sequence is SNRSDNSSDNLRLD. The span at 214-223 shows a compositional bias: polar residues; that stretch reads APPSNDSTLT.

This sequence belongs to the HD-ZIP homeobox family. Class I subfamily. Predominantly expressed in leaves and flowers.

It is found in the nucleus. Probable transcription factor that may act in the sucrose-signaling pathway. The polypeptide is Homeobox-leucine zipper protein ATHB-13 (ATHB-13) (Arabidopsis thaliana (Mouse-ear cress)).